The chain runs to 308 residues: MLTTLLQSDLPGLPLRHCGKVRDVFDIPRKRLPVDTRSGEYLLIVATDRLSAFDVVLPDPIPGKGEILCQISNFWFQKTEHLMPNHLTGINVASVLPDGIDKTLYIQRAVVTKKLKPVGIEAIARGYLIGSGWKDYQRTGKVSGIQLPDGLQEAEKLPDPIFTPSTKAAVGHHDENIDFDTTVKMVGAELAERVRDATLRIYHFAAKYAAECGILLADTKLEFGTDIDGRLYVMDEMLTPDSSRYWPIDEYQVGTSPPSYDKQLVRNYLETLDWDKTAPGPTLPQDIIDRTRAKYTEALQRLAGINID.

It belongs to the SAICAR synthetase family.

It catalyses the reaction 5-amino-1-(5-phospho-D-ribosyl)imidazole-4-carboxylate + L-aspartate + ATP = (2S)-2-[5-amino-1-(5-phospho-beta-D-ribosyl)imidazole-4-carboxamido]succinate + ADP + phosphate + 2 H(+). It participates in purine metabolism; IMP biosynthesis via de novo pathway; 5-amino-1-(5-phospho-D-ribosyl)imidazole-4-carboxamide from 5-amino-1-(5-phospho-D-ribosyl)imidazole-4-carboxylate: step 1/2. This is Phosphoribosylaminoimidazole-succinocarboxamide synthase from Xylella fastidiosa (strain Temecula1 / ATCC 700964).